We begin with the raw amino-acid sequence, 448 residues long: Probable D-serine dehydratase (448 aa).

An N6-(pyridoxal phosphate)lysine modification is found at lysine 119.

This sequence belongs to the serine/threonine dehydratase family. DsdA subfamily. Pyridoxal 5'-phosphate serves as cofactor.

The enzyme catalyses D-serine = pyruvate + NH4(+). In Chromobacterium violaceum (strain ATCC 12472 / DSM 30191 / JCM 1249 / CCUG 213 / NBRC 12614 / NCIMB 9131 / NCTC 9757 / MK), this protein is Probable D-serine dehydratase.